The chain runs to 123 residues: WAP four-disulfide core domain protein 5 (123 aa).

An N-terminal signal peptide occupies residues M1 to G24. WAP domains lie at K27–V74 and S75–A121. Disulfide bonds link C34-C62, C41-C66, C49-C61, C55-C70, C81-C109, C88-C113, C96-C108, and C102-C117.

The protein localises to the secreted. Its function is as follows. Putative acid-stable proteinase inhibitor. This chain is WAP four-disulfide core domain protein 5 (WFDC5), found in Gorilla gorilla gorilla (Western lowland gorilla).